The following is a 460-amino-acid chain: Light-independent protochlorophyllide reductase subunit N (460 aa).

Residues Cys22, Cys47, and Cys107 each coordinate [4Fe-4S] cluster.

The protein belongs to the BchN/ChlN family. As to quaternary structure, protochlorophyllide reductase is composed of three subunits; ChlL, ChlN and ChlB. Forms a heterotetramer of two ChlB and two ChlN subunits. [4Fe-4S] cluster is required as a cofactor.

Its subcellular location is the plastid. It localises to the cyanelle. The catalysed reaction is chlorophyllide a + oxidized 2[4Fe-4S]-[ferredoxin] + 2 ADP + 2 phosphate = protochlorophyllide a + reduced 2[4Fe-4S]-[ferredoxin] + 2 ATP + 2 H2O. Its pathway is porphyrin-containing compound metabolism; chlorophyll biosynthesis (light-independent). Functionally, component of the dark-operative protochlorophyllide reductase (DPOR) that uses Mg-ATP and reduced ferredoxin to reduce ring D of protochlorophyllide (Pchlide) to form chlorophyllide a (Chlide). This reaction is light-independent. The NB-protein (ChlN-ChlB) is the catalytic component of the complex. The polypeptide is Light-independent protochlorophyllide reductase subunit N (Cyanophora paradoxa).